We begin with the raw amino-acid sequence, 335 residues long: Pro-cathepsin H (335 aa).

The first 22 residues, 1–22 (MWAVLSLLCAGAWLLGPPACGA), serve as a signal peptide directing secretion. Positions 23 to 97 (SNLAVSSFEK…DEIRHKYLWS (75 aa)) are excised as a propeptide. N72 and N101 each carry an N-linked (GlcNAc...) asparagine glycan. Cystine bridges form between C102-C327, C138-C181, C172-C214, and C272-C322. A propeptide spanning residues 107 to 115 (GNYLRGTGP) is cleaved from the precursor. The active site involves C141. N-linked (GlcNAc...) asparagine glycosylation is present at N230. Active-site residues include H281 and N301.

Belongs to the peptidase C1 family. Composed of cathepsin H and mini chain; disulfide-linked. Cathepsin H may be split into heavy and light chain. All chains are held together by disulfide bonds.

Its subcellular location is the lysosome. It catalyses the reaction Hydrolysis of proteins, acting as an aminopeptidase (notably, cleaving Arg-|-Xaa bonds) as well as an endopeptidase.. Its function is as follows. Important for the overall degradation of proteins in lysosomes. The protein is Pro-cathepsin H (CTSH) of Sus scrofa (Pig).